The chain runs to 801 residues: Disks large homolog 4 (801 aa).

The 57-residue stretch at 4–60 (KREDTERALQAMEACQSAGDEGFRTRAERLLTIFQSDLFQALLDIQEFYELTVFENQ) folds into the L27 domain. PDZ domains follow at residues 153-240 (EITL…LRHK) and 248-335 (ELKL…AKTL). The disordered stretch occupies residues 339-373 (HHQDAYNPPDITSSYSPHMDMSDYPQALSPSSPRR). The 82-residue stretch at 393-474 (RVVIHRGSTG…TVTIITQYRP (82 aa)) folds into the PDZ 3 domain. In terms of domain architecture, SH3 spans 507–577 (KRSFFIRALF…PSKRRVERKE (71 aa)). Residues 610 to 786 (ARPVIILGPS…IYHHVKSVIE (177 aa)) form the Guanylate kinase-like domain.

This sequence belongs to the MAGUK family. Post-translationally, ubiquitinated by MDM2 in response to NMDA receptor activation, leading to proteasome-mediated degradation of DLG4 which is required for AMPA receptor endocytosis. In terms of processing, palmitoylated. Palmitoylation is required for targeting to postsynaptic density, plasma membrane and synapses.

It is found in the cell membrane. The protein resides in the postsynaptic density. It localises to the synapse. Its function is as follows. Postsynaptic scaffolding protein that plays a critical role in synaptogenesis and synaptic plasticity by providing a platform for the postsynaptic clustering of crucial synaptic proteins. In Danio rerio (Zebrafish), this protein is Disks large homolog 4 (dlg4).